Reading from the N-terminus, the 1151-residue chain is UDP-N-acetylglucosamine--peptide N-acetylglucosaminyltransferase (1151 aa).

12 TPR repeats span residues 125-158, 193-226, 227-260, 261-294, 295-328, 329-362, 363-396, 397-430, 431-464, 465-498, 499-532, and 533-566; these read LKKVTELAHRQFQSGNYVEAEKYCNLVFQSDPNN, AEAYSNLGNYYKEKGQLQDALENYKLAVKLKPEF, IDAYINLAAALVSGGDLEQAVTAYFNALQINPDL, YCVRSDLGNLLKAMGRLEEAKVCYLKAIETQPQF, AVAWSNLGCVFNSQGEIWLAIHHFEKAVTLDPNF, LDAYINLGNVLKEARIFDRAVSAYLRALNLSGNH, AVVHGNLACVYYEQGLIDLAIDTYKKAIDLQPHF, PDAYCNLANALKEKGSVVEAEQMYMKALELCPTH, ADSQNNLANIKREQGKIEDATRLYLKALEIYPEF, AAAHSNLASILQQQGKLNDAILHYKEAIRIAPTF, ADAYSNMGNTLKEMGDSSAAIACYNRAIQINPAF, and ADAHSNLASIHKDAGNMAEAIQSYSTALKLKPDF. The TPR 13; truncated repeat unit spans residues 567 to 577; the sequence is PDAYCNLAHCH. Positions 591-607 match the Nuclear localization signal motif; the sequence is RKLVQIVEDQLCKKRLP. His612 functions as the Proton acceptor in the catalytic mechanism. Residues Gln954, Lys957, 1010 to 1013, 1016 to 1019, 1034 to 1036, and Asp1040 contribute to the UDP site; these read VAAK, HVRR, and GHT.

Belongs to the glycosyltransferase 41 family. O-GlcNAc transferase subfamily.

The protein localises to the nucleus. The protein resides in the cytoplasm. Its subcellular location is the perinuclear region. It catalyses the reaction L-seryl-[protein] + UDP-N-acetyl-alpha-D-glucosamine = 3-O-(N-acetyl-beta-D-glucosaminyl)-L-seryl-[protein] + UDP + H(+). It carries out the reaction L-threonyl-[protein] + UDP-N-acetyl-alpha-D-glucosamine = 3-O-(N-acetyl-beta-D-glucosaminyl)-L-threonyl-[protein] + UDP + H(+). Its pathway is protein modification; protein glycosylation. Addition of nucleotide-activated sugars directly onto the polypeptide through O-glycosidic linkage with the hydroxyl of serine or threonine. Influences tap habituation in the mechanosensory neurons cell autonomously. This is UDP-N-acetylglucosamine--peptide N-acetylglucosaminyltransferase (ogt-1) from Caenorhabditis elegans.